Reading from the N-terminus, the 493-residue chain is ATP synthase subunit beta (493 aa).

169–176 (GGAGVGKT) contributes to the ATP binding site.

This sequence belongs to the ATPase alpha/beta chains family. As to quaternary structure, F-type ATPases have 2 components, CF(1) - the catalytic core - and CF(0) - the membrane proton channel. CF(1) has five subunits: alpha(3), beta(3), gamma(1), delta(1), epsilon(1). CF(0) has three main subunits: a(1), b(2) and c(9-12). The alpha and beta chains form an alternating ring which encloses part of the gamma chain. CF(1) is attached to CF(0) by a central stalk formed by the gamma and epsilon chains, while a peripheral stalk is formed by the delta and b chains.

Its subcellular location is the cell inner membrane. It carries out the reaction ATP + H2O + 4 H(+)(in) = ADP + phosphate + 5 H(+)(out). Its function is as follows. Produces ATP from ADP in the presence of a proton gradient across the membrane. The catalytic sites are hosted primarily by the beta subunits. This chain is ATP synthase subunit beta, found in Gluconacetobacter diazotrophicus (strain ATCC 49037 / DSM 5601 / CCUG 37298 / CIP 103539 / LMG 7603 / PAl5).